The primary structure comprises 524 residues: Protopine 6-monooxygenase (524 aa).

3 helical membrane-spanning segments follow: residues 4–24 (LMLAYLFPISVASIIAFVFLY), 232–252 (LASLSMFSDFAPLLGFVDIFQ), and 319–339 (MIMGGTDTTAVSLTWIISLLM). Cys-462 provides a ligand contact to heme.

This sequence belongs to the cytochrome P450 family. Heme is required as a cofactor.

It is found in the endoplasmic reticulum membrane. It catalyses the reaction protopine + reduced [NADPH--hemoprotein reductase] + O2 = 6-hydroxyprotopine + oxidized [NADPH--hemoprotein reductase] + H2O + H(+). It functions in the pathway alkaloid biosynthesis. Its function is as follows. Catalyzes the conversion of protopine and allocryptopine to dihydrosanguinarine and dihydrochelerythrine, respectively, in the biosynthesis of isoquinoline alkaloid sanguinarine. This chain is Protopine 6-monooxygenase (CYP82N2v2), found in Eschscholzia californica (California poppy).